We begin with the raw amino-acid sequence, 641 residues long: Kelch-like protein 22 (641 aa).

The interval 1-25 is disordered; it reads MAEDLETMKPSQAPQQPSLPQGSSK. Low complexity predominate over residues 10–24; it reads PSQAPQQPSLPQGSS. A BTB domain is found at 50-117; it reads FDVVLKVEGK…IYTSDLALSV (68 aa). 6 Kelch repeats span residues 299 to 349, 350 to 399, 400 to 446, 448 to 493, 494 to 544, and 545 to 593; these read CVVG…VLNN, FVYL…VLGD, FLYA…ALDG, MYVA…ALQE, KIYL…VLAK, and KIFV…VLTL.

Component of the BCR(KLHL22) E3 ubiquitin ligase complex, at least composed of cul3, klhl22 and rbx1.

The protein resides in the cytoplasm. Its subcellular location is the cytosol. The protein localises to the cytoskeleton. It is found in the microtubule organizing center. It localises to the centrosome. The protein resides in the spindle. Its subcellular location is the nucleus. The protein localises to the lysosome. It functions in the pathway protein modification; protein ubiquitination. Its function is as follows. Substrate-specific adapter of a BCR (BTB-CUL3-RBX1) E3 ubiquitin ligase complex. The BCR(KLHL22) ubiquitin ligase complex could mediate the monoubiquitination of PLK1 and regulate its activity in spindle assembly checkpoint (SAC) and chromosome segregation. The BCR(KLHL22) ubiquitin ligase complex may also be responsible for the ubiquitin-dependent proteasomal degradation of DEPDC5 and the activation of the TORC1 pathway. This is Kelch-like protein 22 (klhl22) from Xenopus tropicalis (Western clawed frog).